We begin with the raw amino-acid sequence, 652 residues long: Type III restriction-modification enzyme StyLTI Mod subunit (652 aa).

Residues 135-138 (DPPY) are binding of S-adenosyl methionine.

It belongs to the N(4)/N(6)-methyltransferase family. In terms of assembly, homodimer, also forms a functional restriction-competent complex with Res.

It carries out the reaction a 2'-deoxyadenosine in DNA + S-adenosyl-L-methionine = an N(6)-methyl-2'-deoxyadenosine in DNA + S-adenosyl-L-homocysteine + H(+). A beta subtype methylase that binds the system-specific DNA recognition site 5'-CAGAG-3' and methylates A-4 (of only 1 strand as the other does not have an A residue). DNA restriction requires both the Res and Mod subunits. The polypeptide is Type III restriction-modification enzyme StyLTI Mod subunit (Salmonella typhimurium (strain LT2 / SGSC1412 / ATCC 700720)).